The primary structure comprises 585 residues: Arginine--tRNA ligase (585 aa).

A 'HIGH' region motif is present at residues 131-141; that stretch reads ANPTGPMHVGH.

The protein belongs to the class-I aminoacyl-tRNA synthetase family. In terms of assembly, monomer.

It is found in the cytoplasm. The enzyme catalyses tRNA(Arg) + L-arginine + ATP = L-arginyl-tRNA(Arg) + AMP + diphosphate. In Allorhizobium ampelinum (strain ATCC BAA-846 / DSM 112012 / S4) (Agrobacterium vitis (strain S4)), this protein is Arginine--tRNA ligase.